Reading from the N-terminus, the 491-residue chain is Cobyric acid synthase (491 aa).

Residues 253-429 enclose the GATase cobBQ-type domain; the sequence is ARRVAVIRLP…WHGALEGDEL (177 aa). Catalysis depends on cysteine 334, which acts as the Nucleophile. Histidine 421 is a catalytic residue.

Belongs to the CobB/CobQ family. CobQ subfamily.

The protein operates within cofactor biosynthesis; adenosylcobalamin biosynthesis. Its function is as follows. Catalyzes amidations at positions B, D, E, and G on adenosylcobyrinic A,C-diamide. NH(2) groups are provided by glutamine, and one molecule of ATP is hydrogenolyzed for each amidation. This chain is Cobyric acid synthase, found in Mycolicibacterium gilvum (strain PYR-GCK) (Mycobacterium gilvum (strain PYR-GCK)).